A 340-amino-acid chain; its full sequence is HTH-type transcriptional repressor PurR (340 aa).

In terms of domain architecture, HTH lacI-type spans 2–56; the sequence is ATIKDVAKLVGVSTTTVSHVINKTRFVAEDTTKAVWEAIASLNYSPSAVARSLKV. A DNA-binding region (H-T-H motif) is located at residues 4-23; that stretch reads IKDVAKLVGVSTTTVSHVIN. The DNA-binding element occupies 48 to 56; that stretch reads SAVARSLKV. Tyr73, Lys188, Thr190, Phe219, and Asp273 together coordinate hypoxanthine.

In terms of assembly, homodimer.

It participates in purine metabolism; purine nucleotide biosynthesis [regulation]. Is the main repressor of the genes involved in the de novo synthesis of purine nucleotides, regulating purB, purC, purEK, purF, purHD, purL, purMN and guaBA expression. PurR is allosterically activated to bind its cognate DNA by binding the purine corepressors, hypoxanthine or guanine, thereby effecting transcription repression. The sequence is that of HTH-type transcriptional repressor PurR from Glaesserella parasuis serovar 5 (strain SH0165) (Haemophilus parasuis).